A 349-amino-acid polypeptide reads, in one-letter code: Small ribosomal subunit biogenesis GTPase RsgA (349 aa).

The disordered stretch occupies residues 1-38 (MSKNKLSKGQERRVQANHQRRLKRTDNKPELDDSQLGE). In terms of domain architecture, CP-type G spans 102-272 (TSVLNRPDIY…VIDSPGVREF (171 aa)). Residues 158–161 (NKID) and 212–220 (GQSGVGKSS) each bind GTP. Zn(2+) contacts are provided by Cys296, Cys301, His303, and Cys309.

The protein belongs to the TRAFAC class YlqF/YawG GTPase family. RsgA subfamily. In terms of assembly, monomer. Associates with 30S ribosomal subunit, binds 16S rRNA. Zn(2+) is required as a cofactor.

The protein resides in the cytoplasm. In terms of biological role, one of several proteins that assist in the late maturation steps of the functional core of the 30S ribosomal subunit. Helps release RbfA from mature subunits. May play a role in the assembly of ribosomal proteins into the subunit. Circularly permuted GTPase that catalyzes slow GTP hydrolysis, GTPase activity is stimulated by the 30S ribosomal subunit. The polypeptide is Small ribosomal subunit biogenesis GTPase RsgA (Serratia proteamaculans (strain 568)).